The following is a 162-amino-acid chain: Putative 4-hydroxy-4-methyl-2-oxoglutarate aldolase (162 aa).

Residues 75–78 and arginine 97 each bind substrate; that span reads GDML. Aspartate 98 lines the a divalent metal cation pocket.

Belongs to the class II aldolase/RraA-like family. Homotrimer. The cofactor is a divalent metal cation.

The catalysed reaction is 4-hydroxy-4-methyl-2-oxoglutarate = 2 pyruvate. It carries out the reaction oxaloacetate + H(+) = pyruvate + CO2. Catalyzes the aldol cleavage of 4-hydroxy-4-methyl-2-oxoglutarate (HMG) into 2 molecules of pyruvate. Also contains a secondary oxaloacetate (OAA) decarboxylase activity due to the common pyruvate enolate transition state formed following C-C bond cleavage in the retro-aldol and decarboxylation reactions. This is Putative 4-hydroxy-4-methyl-2-oxoglutarate aldolase from Pseudomonas aeruginosa (strain LESB58).